The chain runs to 951 residues: Thyroid hormone receptor-associated protein 3 (951 aa).

Positions 1–13 (MSKTNKSKSGSRS) are enriched in low complexity. Residues 1–94 (MSKTNKSKSG…YFRGRNRGFY (94 aa)) are disordered. Ser-2 carries the N-acetylserine modification. The tract at residues 2-190 (SKTNKSKSGS…KSSSKDSRPS (189 aa)) is required for mRNA splicing activation. Over residues 14–51 (SRSRSASRSRSRSFSKSRSRSRSVSRSRKRRLSSRSRS) the composition is skewed to basic residues. Residue Arg-17 is modified to Dimethylated arginine. A compositionally biased stretch (basic and acidic residues) spans 58–75 (HNRERNHPRVYQNRDFRG). Arg-66 is modified (asymmetric dimethylarginine). Residues 82 to 94 (RPYYFRGRNRGFY) show a composition bias toward low complexity. An asymmetric dimethylarginine mark is found at Arg-101 and Arg-108. The disordered stretch occupies residues 117-558 (AYSPRRGRSR…GDFSSGKSSF (442 aa)). Residues 121–143 (RRGRSRSRSPKRRSPSPRSRSHS) are compositionally biased toward basic residues. Residues 144–155 (RNSDKSSSDRSR) show a composition bias toward basic and acidic residues. Residues 157 to 166 (SSSSRSSSNH) are compositionally biased toward low complexity. The span at 167–188 (SRVESSKRKSTKEKKSSSKDSR) shows a compositional bias: basic and acidic residues. A Glycyl lysine isopeptide (Lys-Gly) (interchain with G-Cter in SUMO1); alternate cross-link involves residue Lys-202. A Glycyl lysine isopeptide (Lys-Gly) (interchain with G-Cter in SUMO2); alternate cross-link involves residue Lys-202. Over residues 204–220 (QTFSGGTSQDIKGSESS) the composition is skewed to polar residues. Residue Lys-215 forms a Glycyl lysine isopeptide (Lys-Gly) (interchain with G-Cter in SUMO2) linkage. Ser-220 carries the phosphoserine modification. Residue Lys-221 forms a Glycyl lysine isopeptide (Lys-Gly) (interchain with G-Cter in SUMO2); alternate linkage. Lys-221 bears the N6-acetyllysine; alternate mark. Phosphoserine occurs at positions 233, 238, 240, 243, and 248. Lys-252 participates in a covalent cross-link: Glycyl lysine isopeptide (Lys-Gly) (interchain with G-Cter in SUMO2); alternate. At Lys-252 the chain carries N6-methyllysine; alternate. Ser-253 and Ser-257 each carry phosphoserine. The span at 266–276 (RPSPVPKPSPP) shows a compositional bias: pro residues. A compositionally biased stretch (low complexity) spans 305–322 (GSGSLSPSKKSPVGKSPP). Residues Ser-315 and Ser-320 each carry the phosphoserine modification. Phosphothreonine is present on Thr-324. Ser-326 carries the phosphoserine modification. Tyr-328 carries the phosphotyrosine modification. Lys-333 participates in a covalent cross-link: Glycyl lysine isopeptide (Lys-Gly) (interchain with G-Cter in SUMO2). A compositionally biased stretch (low complexity) spans 337 to 346 (AASGGAAYSK). A Phosphoserine modification is found at Ser-339. Lys-346 is covalently cross-linked (Glycyl lysine isopeptide (Lys-Gly) (interchain with G-Cter in SUMO2); alternate). An N6-acetyllysine; alternate modification is found at Lys-346. Over residues 347 to 387 (RYLEEQKTENGKDKEQKQTNADKEKLKEKGGFSDADVKMKS) the composition is skewed to basic and acidic residues. Residues Lys-353 and Lys-375 each participate in a glycyl lysine isopeptide (Lys-Gly) (interchain with G-Cter in SUMO2) cross-link. Residues 359–951 (DKEQKQTNAD…EKDSLQPSAE (593 aa)) form a required for mRNA decay activity region. Ser-379 is subject to Phosphoserine. Lys-384 participates in a covalent cross-link: Glycyl lysine isopeptide (Lys-Gly) (interchain with G-Cter in SUMO1); alternate. Lys-384 participates in a covalent cross-link: Glycyl lysine isopeptide (Lys-Gly) (interchain with G-Cter in SUMO2); alternate. Residues Lys-386 and Lys-393 each participate in a glycyl lysine isopeptide (Lys-Gly) (interchain with G-Cter in SUMO2) cross-link. Phosphothreonine is present on Thr-394. Residue Lys-398 forms a Glycyl lysine isopeptide (Lys-Gly) (interchain with G-Cter in SUMO2) linkage. 2 positions are modified to phosphoserine: Ser-403 and Ser-405. The segment covering 411–449 (LRDDFEKKMADFHKEELDEHDKDKSKGRKEPEFDDEPKF) has biased composition (basic and acidic residues). Glycyl lysine isopeptide (Lys-Gly) (interchain with G-Cter in SUMO2) cross-links involve residues Lys-418 and Lys-424. Residue Lys-448 forms a Glycyl lysine isopeptide (Lys-Gly) (interchain with G-Cter in SUMO1); alternate linkage. Glycyl lysine isopeptide (Lys-Gly) (interchain with G-Cter in SUMO2); alternate cross-links involve residues Lys-448 and Lys-452. Lys-452 is subject to N6-acetyllysine; alternate. Glycyl lysine isopeptide (Lys-Gly) (interchain with G-Cter in SUMO2) cross-links involve residues Lys-459 and Lys-465. Composition is skewed to basic and acidic residues over residues 460–483 (NQEE…RKAE) and 490–518 (FTER…EKNF). The residue at position 466 (Ser-466) is a Phosphoserine. Glycyl lysine isopeptide (Lys-Gly) (interchain with G-Cter in SUMO2); alternate cross-links involve residues Lys-468 and Lys-476. An N6-acetyllysine; alternate mark is found at Lys-468 and Lys-476. Lys-481 is covalently cross-linked (Glycyl lysine isopeptide (Lys-Gly) (interchain with G-Cter in SUMO2)). Lys-516 carries the N6-acetyllysine modification. Lys-524 is covalently cross-linked (Glycyl lysine isopeptide (Lys-Gly) (interchain with G-Cter in SUMO2); alternate). Lys-524 is subject to N6-acetyllysine; alternate. Ser-532 is modified (phosphoserine). A compositionally biased stretch (basic and acidic residues) spans 537–547 (KTSESRDKLGS). A Glycyl lysine isopeptide (Lys-Gly) (interchain with G-Cter in SUMO2) cross-link involves residue Lys-548. Low complexity predominate over residues 548–558 (KGDFSSGKSSF). ATP is bound at residue 549–556 (GDFSSGKS). Lys-555 participates in a covalent cross-link: Glycyl lysine isopeptide (Lys-Gly) (interchain with G-Cter in SUMO2); alternate. N6-acetyllysine; alternate is present on Lys-555. Residues Ser-557, Ser-559, and Ser-572 each carry the phosphoserine modification. Residue Lys-599 forms a Glycyl lysine isopeptide (Lys-Gly) (interchain with G-Cter in SUMO2) linkage. 5 positions are modified to phosphoserine: Ser-616, Ser-619, Ser-669, Ser-679, and Ser-681. Residues 660 to 677 (EQEAAKNKKSPEIHRRID) are compositionally biased toward basic and acidic residues. Residues 660–951 (EQEAAKNKKS…EKDSLQPSAE (292 aa)) form a disordered region. Basic and acidic residues predominate over residues 688–758 (LTHEELKSPR…RSTEKTEKTH (71 aa)). Residue Lys-694 forms a Glycyl lysine isopeptide (Lys-Gly) (interchain with G-Cter in SUMO2) linkage. Phosphoserine is present on Ser-695. Residues Lys-702, Lys-706, Lys-708, Lys-753, and Lys-756 each participate in a glycyl lysine isopeptide (Lys-Gly) (interchain with G-Cter in SUMO2) cross-link. Basic residues predominate over residues 759–772 (KGSKKQKKHRRARD). Residues 776 to 786 (SSSSSSQSSHS) show a composition bias toward low complexity. Lys-808 carries the post-translational modification N6-acetyllysine. Arg-841 carries the asymmetric dimethylarginine modification. Residues 844–854 (YSGNNNNNSNN) are compositionally biased toward low complexity. The residue at position 860 (Ser-860) is a Phosphoserine. A Phosphothreonine modification is found at Thr-870. Glycyl lysine isopeptide (Lys-Gly) (interchain with G-Cter in SUMO2) cross-links involve residues Lys-872 and Lys-875. The segment covering 877–891 (YLHDDREGEGSDKWM) has biased composition (basic and acidic residues). Residues Ser-924 and Ser-935 each carry the phosphoserine modification. Residues 926 to 936 (EEGEIEDDESG) show a composition bias toward acidic residues.

Belongs to the BCLAF1/THRAP3 family. As to quaternary structure, associated with the large multiprotein complex TRAP (Mediator complex-like). Interacts with SFPQ; the interaction is dependent on SFPQ phosphorylation at 'Thr-687' and inhibits binding of SFPQ to an ESS1 exonic splicing silencer element-containing RNA. Interacts with NXF1. Component of the SNARP complex which consists at least of SNIP1, SNW1, THRAP3, BCLAF1 and PNN. Associated with spliced mRNP complexes. Interacts with HELZ2 and PPARG. Interacts with CLOCK and BMAL1. Component of a MACOM-like complex, named WTAP complex, composed of WTAP, ZC3H13, CBLL1, KIAA1429, RBM15, BCLAF1 and THRAP3.

It localises to the nucleus. Its subcellular location is the nucleoplasm. The protein resides in the nucleus speckle. Involved in pre-mRNA splicing. Remains associated with spliced mRNA after splicing which probably involves interactions with the exon junction complex (EJC). Can trigger mRNA decay which seems to be independent of nonsense-mediated decay involving premature stop codons (PTC) recognition. May be involved in nuclear mRNA decay. Involved in regulation of signal-induced alternative splicing. During splicing of PTPRC/CD45 is proposed to sequester phosphorylated SFPQ from PTPRC/CD45 pre-mRNA in resting T-cells. Involved in cyclin-D1/CCND1 mRNA stability probably by acting as component of the SNARP complex which associates with both the 3'end of the CCND1 gene and its mRNA. Involved in response to DNA damage. Is excluced from DNA damage sites in a manner that parallels transcription inhibition; the function may involve the SNARP complex. Initially thought to play a role in transcriptional coactivation through its association with the TRAP complex; however, it is not regarded as a stable Mediator complex subunit. Cooperatively with HELZ2, enhances the transcriptional activation mediated by PPARG, maybe through the stabilization of the PPARG binding to DNA in presence of ligand. May play a role in the terminal stage of adipocyte differentiation. Plays a role in the positive regulation of the circadian clock. Acts as a coactivator of the CLOCK-BMAL1 heterodimer and promotes its transcriptional activator activity and binding to circadian target genes. This chain is Thyroid hormone receptor-associated protein 3 (Thrap3), found in Mus musculus (Mouse).